The chain runs to 260 residues: Uroplakin-1b (260 aa).

The Cytoplasmic segment spans residues 1-15 (MAKDDSTVRCFQGLL). The chain crosses the membrane as a helical span at residues 16-36 (IFGHVIVGMCGIALTAECIFF). The Extracellular segment spans residues 37–59 (VSDQHSLYPLLEATNNDDIFGAA). Residues 60–80 (WIGMFVGICLFCLSVLAIVGI) traverse the membrane as a helical segment. At 81-86 (MKSNRK) the chain is on the cytoplasmic side. The helical transmembrane segment at 87 to 107 (ILLAYFIMMFIVYGFEVASCI) threads the bilayer. At 108–229 (TAATQRDFFT…ELISGPMDRH (122 aa)) the chain is on the extracellular side. Residues 230–250 (AWGVAWFGFAILCWTFWVLLG) form a helical membrane-spanning segment. The Cytoplasmic segment spans residues 251 to 260 (TMFYWSRIEY).

Belongs to the tetraspanin (TM4SF) family. Heterodimer with uroplakin-3A (UPK3A) or uroplakin-3B (UPK3B). In terms of processing, N-glycosylated with high-mannose oligosaccharides.

The protein localises to the membrane. Component of the asymmetric unit membrane (AUM); a highly specialized biomembrane elaborated by terminally differentiated urothelial cells. May play an important role in normal bladder epithelial physiology, possibly in regulating membrane permeability of superficial umbrella cells or in stabilizing the apical membrane through AUM/cytoskeletal interactions. The polypeptide is Uroplakin-1b (Upk1b) (Rattus norvegicus (Rat)).